The chain runs to 433 residues: MNAADESLGNVLLVGLGAVAIQVALDLRRHGAGRLGALNHPGRRSQRIAEALARGACLQLEGQGQHRWLSGNAALDVFHQDPAELRDDWQTLVLCVPADSYLDVVRGLPWERLGGVRTLLLVSAFIGANLLVRSALPAGCQATVLSLSSYYAATKVIDETQPLRALTKAVKRRVYLGSSRPDCPARETWRRVLAGSGVEVVPLATPEAAEGRNVTTYVHSPFFLGEFALARILSEQGPPGFMYKLYPEGPITPGAIGAMRRLWCELSELLRRMGAEPLNLLRFLNDDNYPVHETMLPRAAIDGFAEAGAERQEYLLFVRYAALLVDPFSPADEQGRHFDFSAVPFRRVSRDEDGLWRLPRVPLEDYRKLALIVALAAHFDLAMPQARSLLASYENAVSRFIDCQGASQCHPSLYPIDSRPAADAIYRQWCSTC.

Residues 7 to 27 (SLGNVLLVGLGAVAIQVALDL) form a helical membrane-spanning segment. NAD(+)-binding positions include 16–19 (LGAV), 39–40 (NH), and Thr-154. His-219 acts as the Proton donor/acceptor in catalysis. Glu-364 contacts NAD(+).

It belongs to the staphylopine dehydrogenase family. As to quaternary structure, homodimer. Interacts with CntL.

The protein resides in the cell membrane. The enzyme catalyses pseudopaline + NAD(+) + H2O = (2S)-2-amino-4-{[(1S)-1-carboxy-2-(1H-imidazol-4-yl)ethyl]amino}butanoate + 2-oxoglutarate + NADH + H(+). Functionally, catalyzes the NADH-dependent reductive condensation of alpha-ketoglutarate to the intermediate formed by the adjacently encoded enzyme CntL, namely (2S)-2-amino-4-{[(1S)-1-carboxy-2-(1H-imidazol-4-yl)ethyl]amino}butanoate, leading to the production of pseudopaline. This is the last step in the biosynthesis of the metallophore pseudopaline, which is involved in the acquisition of nickel and zinc, and thus enables bacterial growth inside the host, where metal access is limited. Therefore, this enzyme probably contributes to Pseudomonas virulence. Can use neither pyruvate nor NADPH in place of alpha-ketoglutarate and NADH, respectively. This is Pseudopaline synthase from Pseudomonas aeruginosa (strain UCBPP-PA14).